A 373-amino-acid polypeptide reads, in one-letter code: Transaldolase (373 aa).

Lysine 143 (schiff-base intermediate with substrate) is an active-site residue.

This sequence belongs to the transaldolase family. Type 2 subfamily.

Its subcellular location is the cytoplasm. It carries out the reaction D-sedoheptulose 7-phosphate + D-glyceraldehyde 3-phosphate = D-erythrose 4-phosphate + beta-D-fructose 6-phosphate. It functions in the pathway carbohydrate degradation; pentose phosphate pathway; D-glyceraldehyde 3-phosphate and beta-D-fructose 6-phosphate from D-ribose 5-phosphate and D-xylulose 5-phosphate (non-oxidative stage): step 2/3. In terms of biological role, transaldolase is important for the balance of metabolites in the pentose-phosphate pathway. The polypeptide is Transaldolase (tal) (Mycobacterium tuberculosis (strain ATCC 25618 / H37Rv)).